The following is a 235-amino-acid chain: Ribonuclease PH (235 aa).

Residues Arg86 and 124-126 (GTR) each bind phosphate.

Belongs to the RNase PH family. Homohexameric ring arranged as a trimer of dimers.

The catalysed reaction is tRNA(n+1) + phosphate = tRNA(n) + a ribonucleoside 5'-diphosphate. Functionally, phosphorolytic 3'-5' exoribonuclease that plays an important role in tRNA 3'-end maturation. Removes nucleotide residues following the 3'-CCA terminus of tRNAs; can also add nucleotides to the ends of RNA molecules by using nucleoside diphosphates as substrates, but this may not be physiologically important. Probably plays a role in initiation of 16S rRNA degradation (leading to ribosome degradation) during starvation. The sequence is that of Ribonuclease PH from Francisella philomiragia subsp. philomiragia (strain ATCC 25017 / CCUG 19701 / FSC 153 / O#319-036).